The primary structure comprises 737 residues: Glycogen [starch] synthase, muscle (737 aa).

The residue at position 8 (Ser8) is a Phosphoserine; by AMPK and PKA. Ser11 carries the phosphoserine modification. Lys39 provides a ligand contact to UDP. UDP-alpha-D-glucose-binding residues include His205 and Arg211. His291, Glu292, Gln294, His297, and Lys301 together coordinate alpha-D-glucose 6-phosphate. Arg331 serves as a coordination point for UDP. Arg331 contributes to the UDP-alpha-D-glucose binding site. Ser412 is subject to Phosphoserine. Alpha-D-glucose 6-phosphate is bound at residue His501. The UDP-alpha-D-glucose site is built by Glu510, Trp512, and Gly513. Thr515 contacts UDP. Residues Arg582 and Arg586 each coordinate alpha-D-glucose 6-phosphate. A disordered region spans residues 634–737 (YRYPRPASVP…PTSSLGEERN (104 aa)). Ser641 is subject to Phosphoserine; by DYRK2, GSK3-alpha, GSK3-beta and PASK. A phosphoserine; by GSK3-alpha and GSK3-beta mark is found at Ser645 and Ser649. Ser652 bears the Phosphoserine mark. At Ser653 the chain carries Phosphoserine; by GSK3-alpha and GSK3-beta. At Ser657 the chain carries Phosphoserine; by CK2. The segment covering 658 to 681 (EDEEDPRNGPLEEDGERYDEDEEA) has biased composition (acidic residues). Residues 682–695 (AKDRRNIRAPEWPR) show a composition bias toward basic and acidic residues. Ser698 carries the post-translational modification Phosphoserine. The segment covering 698-714 (SCTSSTSGSKRNSVDTA) has biased composition (polar residues). Thr700 is modified (phosphothreonine). A Phosphoserine modification is found at Ser710. Residues 715–737 (TSSSLSTPSEPLSPTSSLGEERN) show a composition bias toward low complexity. The residue at position 721 (Thr721) is a Phosphothreonine. Phosphoserine occurs at positions 727 and 731.

Belongs to the glycosyltransferase 3 family. As to quaternary structure, part of the GYS1-GYG1 complex, a heterooctamer composed of a tetramer of GYS1 and 2 dimers of GYG1, where each GYS1 protomer binds to one GYG1 subunit (via GYG1 C-terminus); the GYS1 tetramer may dissociate from GYG1 dimers to continue glycogen polymerization on its own. Post-translationally, phosphorylation at Ser-8 by AMPK inactivates the enzyme activity. Primed phosphorylation at Ser-657 (site 5) by CSNK2A1 and CSNK2A2 is required for inhibitory phosphorylation at Ser-641 (site 3a), Ser-645 (site 3b), Ser-649 (site 3c) and Ser-653 (site 4) by GSK3A an GSK3B. Phosphorylated at Ser-641 by PASK, leading to inactivation; phosphorylation by PASK is inhibited by glycogen. Phosphorylated at Ser-641 by DYRK2, leading to inactivation. Dephosphorylation at Ser-641 and Ser-645 by PP1 activates the enzyme.

The enzyme catalyses [(1-&gt;4)-alpha-D-glucosyl](n) + UDP-alpha-D-glucose = [(1-&gt;4)-alpha-D-glucosyl](n+1) + UDP + H(+). It functions in the pathway glycan biosynthesis; glycogen biosynthesis. With respect to regulation, allosteric activation by glucose-6-phosphate. Phosphorylation reduces the activity towards UDP-glucose. When in the non-phosphorylated state, glycogen synthase does not require glucose-6-phosphate as an allosteric activator; when phosphorylated it does. Its function is as follows. Glycogen synthase participates in the glycogen biosynthetic process along with glycogenin and glycogen branching enzyme. Extends the primer composed of a few glucose units formed by glycogenin by adding new glucose units to it. In this context, glycogen synthase transfers the glycosyl residue from UDP-Glc to the non-reducing end of alpha-1,4-glucan. This is Glycogen [starch] synthase, muscle (GYS1) from Pongo abelii (Sumatran orangutan).